Consider the following 326-residue polypeptide: DnaJ homolog subfamily B member 6 (326 aa).

The J domain occupies 2–69; that stretch reads VDYYEVLGVQ…KKRDIYDKYG (68 aa). The segment at 2–146 is interaction with HSP70; that stretch reads VDYYEVLGVQ…TGSFFSAFSG (145 aa). Residues 119–242 are interaction with KRT18; that stretch reads FEDFFGNRRG…ADDDALAEER (124 aa). Arg135 bears the Omega-N-methylarginine mark. The tract at residues 249 to 326 is disordered; sequence ALPAQPAGLR…KKKKSTKGNH (78 aa). Residue Ser277 is modified to Phosphoserine.

As to quaternary structure, homooligomer. Interacts with BAG3, HSPB8 and STUB1. Interacts with ALKBH1. Interacts with HSP70, KRT18 and PTTG. In terms of assembly, interacts with histone deacetylases HDAC4, HDAC6, and SIRT2, HDAC activity is required for antiaggregation. Widely expressed. Highest levels in testis and brain, and lower levels in heart, spleen, intestine, ovary, placenta, lung, kidney, pancreas, thymus, prostate, skeletal muscle, liver and leukocytes. In testis, expressed in germ cells in the earlier stages of differentiation pathway as well as in spermatids. In brain, expressed at a higher level in hippocampus and thalamus and a lower level in amygdala, substantia nigra, corpus callosum and caudate nucleus.

It is found in the cytoplasm. Its subcellular location is the perinuclear region. It localises to the nucleus. The protein resides in the myofibril. The protein localises to the sarcomere. It is found in the z line. In terms of biological role, has a stimulatory effect on the ATPase activity of HSP70 in a dose-dependent and time-dependent manner and hence acts as a co-chaperone of HSP70. Plays an indispensable role in the organization of KRT8/KRT18 filaments. Acts as an endogenous molecular chaperone for neuronal proteins including huntingtin. Suppresses aggregation and toxicity of polyglutamine-containing, aggregation-prone proteins. Also reduces cellular toxicity and caspase-3 activity. Its function is as follows. Isoform B but not isoform A inhibits huntingtin aggregation. This Homo sapiens (Human) protein is DnaJ homolog subfamily B member 6 (DNAJB6).